The chain runs to 86 residues: Sulmotoxin 2 (86 aa).

An N-terminal signal peptide occupies residues 1–21 (MKTLLLALAVVAFMCLDSVYP). Intrachain disulfides connect Cys-24–Cys-47, Cys-27–Cys-35, Cys-41–Cys-62, Cys-66–Cys-77, and Cys-78–Cys-83.

Belongs to the three-finger toxin family. Ancestral subfamily. Boigatoxin sub-subfamily. In terms of assembly, monomer. In terms of tissue distribution, expressed by the venom gland.

It is found in the secreted. Probable neurotoxin. Is not toxic to mice and geckos. In Spilotes sulphureus (Amazon puffing snake), this protein is Sulmotoxin 2.